We begin with the raw amino-acid sequence, 203 residues long: Ras-like protein family member 10A (203 aa).

The tract at residues 1–203 is small GTPase-like; the sequence is MGGSLRVAVL…ALHPARCSLM (203 aa). 11 to 18 serves as a coordination point for GTP; the sequence is GAPGVGKT. The Effector region signature appears at 33-42; sequence HRPTDGPRLY. Residues 59–62 and 129–132 each bind GTP; these read DGDV and NKRD. Residue C200 is modified to Cysteine methyl ester. C200 carries the S-farnesyl cysteine lipid modification. Residues 201-203 constitute a propeptide, removed in mature form; the sequence is SLM.

It belongs to the small GTPase superfamily. Ras family. In terms of processing, isoprenylation is essential for nucleolar localization, and the proliferation-inhibiting activity of RASL10A. Expression appears to be strictly limited to the central nervous system.

It is found in the cell membrane. The protein localises to the nucleus. Its subcellular location is the nucleolus. The enzyme catalyses GTP + H2O = GDP + phosphate + H(+). In terms of biological role, potent inhibitor of cellular proliferation. The sequence is that of Ras-like protein family member 10A (RASL10A) from Homo sapiens (Human).